A 666-amino-acid polypeptide reads, in one-letter code: LEAF RUST 10 DISEASE-RESISTANCE LOCUS RECEPTOR-LIKE PROTEIN KINASE-like 2.5 (666 aa).

A signal peptide spans 1–30; it reads MINFSLSLTKSMSYSFIWMLFVIHISCVLS. The Extracellular portion of the chain corresponds to 31–275; the sequence is ADGNHILCSP…PTRNKVILKL (245 aa). 4 N-linked (GlcNAc...) asparagine glycosylation sites follow: Asn-119, Asn-141, Asn-171, and Asn-198. The chain crosses the membrane as a helical span at residues 276-296; the sequence is FFIVIYVLGIGAASFAMMGVI. Residues 297–666 lie on the Cytoplasmic side of the membrane; that stretch reads LVVTCLNCLI…YTEICSINVA (370 aa). Positions 348–636 constitute a Protein kinase domain; the sequence is KSFAEVIGKG…ALEVPPRPVL (289 aa). ATP contacts are provided by residues 354-362 and Lys-376; that span reads IGKGGFGTV. Phosphotyrosine is present on Tyr-420. Asp-471 acts as the Proton acceptor in catalysis. Phosphothreonine occurs at positions 508 and 511.

It belongs to the protein kinase superfamily. Ser/Thr protein kinase family.

It localises to the membrane. It catalyses the reaction L-seryl-[protein] + ATP = O-phospho-L-seryl-[protein] + ADP + H(+). It carries out the reaction L-threonyl-[protein] + ATP = O-phospho-L-threonyl-[protein] + ADP + H(+). This is LEAF RUST 10 DISEASE-RESISTANCE LOCUS RECEPTOR-LIKE PROTEIN KINASE-like 2.5 from Arabidopsis thaliana (Mouse-ear cress).